We begin with the raw amino-acid sequence, 227 residues long: uncharacterized protein (227 aa).

The region spanning 3 to 119 (RADFCIIGLG…STMGIREALI (117 aa)) is the RCK N-terminal domain. One can recognise an RCK C-terminal domain in the interval 134 to 221 (HGLENEIINL…LNKYLNYINP (88 aa)).

This is an uncharacterized protein from Mycoplasma genitalium (strain ATCC 33530 / DSM 19775 / NCTC 10195 / G37) (Mycoplasmoides genitalium).